Here is an 801-residue protein sequence, read N- to C-terminus: MEASGKLICRQRQVLFSFLLLGLSLAGAAEPRSYSVVEETEGSSFVTNLAKDLGLEQREFSRRGVRVVSRGNKLHLQLNQETGDLLLNEKLDREDLCGHTEPCVLRFQVLLESPFEFFQAELQVIDINDHSPVFLDKQMLVKVSESSPPGTAFPLKNAEDLDVGQNNIENYIISPNSYFRVLTRKRSDGRKYPELVLDKALDREEEAELRLTLTALDGGSPPRSGTAQVYIEVVDVNDNAPEFEQPFYRVQISEDSPISFLVVKVSATDVDTGVNGEISYSLFQASDEISKTFKVDFLTGEIRLKKQLDFEKFQSYEVNIEARDAGGFSGKCTVLIQVIDVNDHAPEVTMSAFTSPIPENAPETVVALFSVSDLDSGENGKISCSIQEDLPFLLKSSVGNFYTLLTETPLDRESRAEYNVTITVTDLGTPGLTTHLNMTVLVSDVNDNAPAFTQASYTLFVRENNSPALHIGSVSATDRDSGTNAQVTYSLLPPQNPHLPLASLVSINTDNGHLFALRSLDYEALQAFEFRVGASDRGSPALSSEALVRVLVLDANDNSPFVLYPLQNSSAPCTELVPRAAEPGYLVTKVVAVDGDSGQNAWLSYQLLKATEPGLFGVWAHNGEVRTARLLSERDAAKQRLVVLVKDNGEPPCSATATLHVLLVDGFSQPYLPLPEAAPAQGQADSLTVYLVVALASVSSLFLFSVLLFVAVRLCRRSRAASVGRCSVPEGPFPGHLVDVRGTGSLSQNYQYEVCLAGGSGTNEFQFLKPVLPNIQGHSFGPEMEQNSNFRNGFGFSLQLK.

An N-terminal signal peptide occupies residues 1-29 (MEASGKLICRQRQVLFSFLLLGLSLAGAA). Residues 30–691 (EPRSYSVVEE…GQADSLTVYL (662 aa)) lie on the Extracellular side of the membrane. Cadherin domains lie at 36-134 (VVEE…SPVF), 139-243 (MLVK…APEF), 248-348 (YRVQ…APEV), 353-452 (FTSP…APAF), and 457-562 (YTLF…SPFV). Cys-97 and Cys-103 are joined by a disulfide. N-linked (GlcNAc...) asparagine glycans are attached at residues Asn-419 and Asn-437. N-linked (GlcNAc...) asparagine glycosylation occurs at Asn-568. The region spanning 569-672 (SSAPCTELVP…LVDGFSQPYL (104 aa)) is the Cadherin 6 domain. Residues 692–710 (VVALASVSSLFLFSVLLFV) traverse the membrane as a helical segment. The Cytoplasmic segment spans residues 711-801 (AVRLCRRSRA…NGFGFSLQLK (91 aa)).

Forms homodimers in trans (molecules expressed by two different cells). Forms promiscuous heterodimers in cis (at the plasma membrane of the same cell) with other protocadherins.

It localises to the cell membrane. Functionally, calcium-dependent cell-adhesion protein involved in cells self-recognition and non-self discrimination. Thereby, it is involved in the establishment and maintenance of specific neuronal connections in the brain. This Pan troglodytes (Chimpanzee) protein is Protocadherin beta-8.